The chain runs to 252 residues: 2-succinyl-6-hydroxy-2,4-cyclohexadiene-1-carboxylate synthase (252 aa).

The protein belongs to the AB hydrolase superfamily. MenH family. As to quaternary structure, monomer.

It catalyses the reaction 5-enolpyruvoyl-6-hydroxy-2-succinyl-cyclohex-3-ene-1-carboxylate = (1R,6R)-6-hydroxy-2-succinyl-cyclohexa-2,4-diene-1-carboxylate + pyruvate. Its pathway is quinol/quinone metabolism; 1,4-dihydroxy-2-naphthoate biosynthesis; 1,4-dihydroxy-2-naphthoate from chorismate: step 3/7. It functions in the pathway quinol/quinone metabolism; menaquinone biosynthesis. Catalyzes a proton abstraction reaction that results in 2,5-elimination of pyruvate from 2-succinyl-5-enolpyruvyl-6-hydroxy-3-cyclohexene-1-carboxylate (SEPHCHC) and the formation of 2-succinyl-6-hydroxy-2,4-cyclohexadiene-1-carboxylate (SHCHC). This is 2-succinyl-6-hydroxy-2,4-cyclohexadiene-1-carboxylate synthase from Shigella flexneri serotype 5b (strain 8401).